Consider the following 469-residue polypeptide: Trigger factor (469 aa).

In terms of domain architecture, PPIase FKBP-type spans 162-243 (GDFVSIDLSA…VKSVKERELP (82 aa)). Positions 438 to 469 (GPSGEQAAEDSAEESTDAAEGEAAEDADDTDK) are disordered. The span at 444 to 469 (AAEDSAEESTDAAEGEAAEDADDTDK) shows a compositional bias: acidic residues.

This sequence belongs to the FKBP-type PPIase family. Tig subfamily.

It is found in the cytoplasm. It carries out the reaction [protein]-peptidylproline (omega=180) = [protein]-peptidylproline (omega=0). Its function is as follows. Involved in protein export. Acts as a chaperone by maintaining the newly synthesized protein in an open conformation. Functions as a peptidyl-prolyl cis-trans isomerase. The polypeptide is Trigger factor (Mycolicibacterium smegmatis (strain ATCC 700084 / mc(2)155) (Mycobacterium smegmatis)).